The chain runs to 157 residues: 2-C-methyl-D-erythritol 2,4-cyclodiphosphate synthase (157 aa).

A divalent metal cation contacts are provided by Asp-9 and His-11. 4-CDP-2-C-methyl-D-erythritol 2-phosphate contacts are provided by residues 9–11 (DVH) and 35–36 (HS). His-43 contacts a divalent metal cation. 4-CDP-2-C-methyl-D-erythritol 2-phosphate is bound by residues 57–59 (DIG), Phe-140, and Arg-143.

It belongs to the IspF family. As to quaternary structure, homotrimer. Requires a divalent metal cation as cofactor.

It catalyses the reaction 4-CDP-2-C-methyl-D-erythritol 2-phosphate = 2-C-methyl-D-erythritol 2,4-cyclic diphosphate + CMP. It functions in the pathway isoprenoid biosynthesis; isopentenyl diphosphate biosynthesis via DXP pathway; isopentenyl diphosphate from 1-deoxy-D-xylulose 5-phosphate: step 4/6. Functionally, involved in the biosynthesis of isopentenyl diphosphate (IPP) and dimethylallyl diphosphate (DMAPP), two major building blocks of isoprenoid compounds. Catalyzes the conversion of 4-diphosphocytidyl-2-C-methyl-D-erythritol 2-phosphate (CDP-ME2P) to 2-C-methyl-D-erythritol 2,4-cyclodiphosphate (ME-CPP) with a corresponding release of cytidine 5-monophosphate (CMP). The polypeptide is 2-C-methyl-D-erythritol 2,4-cyclodiphosphate synthase (Caldicellulosiruptor bescii (strain ATCC BAA-1888 / DSM 6725 / KCTC 15123 / Z-1320) (Anaerocellum thermophilum)).